A 571-amino-acid chain; its full sequence is Podocalyxin (571 aa).

A signal peptide spans 1–22; that stretch reads MRPAPPPPLLLLLLLLPPPSLS. The Extracellular segment spans residues 23-474; sequence HDGTIIAATS…EETEDRFSMP (452 aa). Residues 94–361 form a disordered region; that stretch reads NTVIAPDQDE…QGDDRIKCES (268 aa). Positions 106–116 are enriched in polar residues; it reads STNPTIATSDS. An N-linked (GlcNAc...) asparagine glycan is attached at asparagine 123. Polar residues-rich tracts occupy residues 126–144, 151–169, 176–203, and 218–245; these read ILPS…TQTA, NPGT…QTTS, KPSS…STTL, and TASS…SSVT. Asparagine 199 is a glycosylation site (N-linked (GlcNAc...) asparagine). The span at 282-300 shows a compositional bias: low complexity; sequence TTSLPSETESLESPSSESP. Over residues 301–311 the composition is skewed to pro residues; it reads SQPPKLRPTGP. Residues 312–322 show a composition bias toward low complexity; it reads PSSGSSGPAAS. 2 N-linked (GlcNAc...) asparagine glycosylation sites follow: asparagine 373 and asparagine 383. Residues 475 to 495 form a helical membrane-spanning segment; that stretch reads LIITIVCMASFLLLVAALYGC. The Cytoplasmic segment spans residues 496–571; that stretch reads CHQRLSQRKD…DLDEEEDTHL (76 aa). At threonine 531 the chain carries Phosphothreonine. At serine 550 the chain carries Phosphoserine. Phosphothreonine is present on threonine 569.

This sequence belongs to the podocalyxin family. As to quaternary structure, found in a complex with EZR, PODXL and NHERF2. Associates with the actin cytoskeleton through complex formation with EZR and NHERF2. Interacts (via the C-terminal PDZ-binding motif DTHL) with NHERF1 (via the PDZ domains); interaction is not detected in glomerular epithelium cells. Interacts (via the C-terminal PDZ-binding motif DTHL) with NHERF2 (via the PDZ 1 domain); interaction is detected in glomerular epithelium cells. Interacts with EZR. Monomer; when associated with the membrane raft. Oligomer; when integrated in the apical membrane. Interacts with NHERF2. Interacts (via the C-terminal PDZ-binding motif DTHL) with NHERF1 (via the PDZ domains); the interaction take place early in the secretory pathway and is necessary for its apical membrane sorting. In terms of processing, N- and O-linked glycosylated. Sialoglycoprotein. Expressed in glomerular and tubular epithelial cells and peritubular capillaries of the kidney (at protein level). Expressed in heart, lung, renal cortex and medulla, kidney and muscle.

Its subcellular location is the apical cell membrane. It is found in the membrane raft. The protein localises to the cell projection. It localises to the lamellipodium. The protein resides in the filopodium. Its subcellular location is the ruffle. It is found in the microvillus. The protein localises to the membrane. In terms of biological role, involved in the regulation of both adhesion and cell morphology and cancer progression. Functions as an anti-adhesive molecule that maintains an open filtration pathway between neighboring foot processes in the podocyte by charge repulsion. Acts as a pro-adhesive molecule, enhancing the adherence of cells to immobilized ligands, increasing the rate of migration and cell-cell contacts in an integrin-dependent manner. Induces the formation of apical actin-dependent microvilli. Involved in the formation of a preapical plasma membrane subdomain to set up initial epithelial polarization and the apical lumen formation during renal tubulogenesis. Plays a role in cancer development and aggressiveness by inducing cell migration and invasion through its interaction with the actin-binding protein EZR. Affects EZR-dependent signaling events, leading to increased activities of the MAPK and PI3K pathways in cancer cells. In Canis lupus familiaris (Dog), this protein is Podocalyxin (PODXL).